The sequence spans 430 residues: Terminal nucleotidyltransferase 5B (430 aa).

Residues 1 to 46 (MMPSESETESRDRAAAQVGTAAAAAVAKAAPAGGGPDPEASSASLG) are disordered. Residues 15 to 44 (AAQVGTAAAAAVAKAAPAGGGPDPEASSAS) show a composition bias toward low complexity.

It belongs to the TENT family.

It localises to the cytoplasm. The protein resides in the nucleus. The enzyme catalyses RNA(n) + ATP = RNA(n)-3'-adenine ribonucleotide + diphosphate. Its function is as follows. Catalyzes the transfer of one adenosine molecule from an ATP to an mRNA poly(A) tail bearing a 3'-OH terminal group in an ATP hydrolysis-dependent manner. May be involved in maintaining the translation efficiency of at least some genes through preventing degradation of their mRNAs. Prefers RNA molecules that are adenosine-rich close to 3'-end. In addition, may inhibit cell proliferation and cell cycle progression through ubiquitination of beta-catenin/CTNNB1. In Bos taurus (Bovine), this protein is Terminal nucleotidyltransferase 5B.